Here is a 374-residue protein sequence, read N- to C-terminus: Patatin-2-Kuras 1 (374 aa).

The N-terminal stretch at 1–11 (MILATTGSTCA) is a signal peptide. Positions 20-217 (LSIDGGGIKG…TVGDPALLSL (198 aa)) constitute a PNPLA domain. The short motif at 24–29 (GGGIKG) is the GXGXXG element. The short motif at 63-67 (GTSTG) is the GXSXG element. Ser65 serves as the catalytic Nucleophile. Residue Asn103 is glycosylated (N-linked (GlcNAc...) asparagine). Asp203 (proton acceptor) is an active-site residue. The DGA/G signature appears at 203–205 (DGA). A coiled-coil region spans residues 309–372 (ENALTGTTTE…DRKKLRANKA (64 aa)).

This sequence belongs to the patatin family. In terms of tissue distribution, tuber.

It localises to the vacuole. In terms of biological role, probable lipolytic acyl hydrolase (LAH), an activity which is thought to be involved in the response of tubers to pathogens. This chain is Patatin-2-Kuras 1 (pat2-k1), found in Solanum tuberosum (Potato).